Reading from the N-terminus, the 341-residue chain is UPF0284 protein Ta0078 (341 aa).

It belongs to the UPF0284 family.

This is UPF0284 protein Ta0078 from Thermoplasma acidophilum (strain ATCC 25905 / DSM 1728 / JCM 9062 / NBRC 15155 / AMRC-C165).